A 118-amino-acid chain; its full sequence is Small ribosomal subunit protein mS41 (118 aa).

A mitochondrion-targeting transit peptide spans 1–24 (MLRVVAKAQYPAAVRCFSTSHAAF).

It belongs to the mitochondrion-specific ribosomal protein mS41 family.

Its subcellular location is the mitochondrion. Functionally, involved in telomere length regulation. This Yarrowia lipolytica (strain CLIB 122 / E 150) (Yeast) protein is Small ribosomal subunit protein mS41 (FYV4).